Here is a 319-residue protein sequence, read N- to C-terminus: MPSQLEALRRHTTVVADTGDFETMRALRPTDATTNPSLILKAVQQAAYRPLLDQVARDHRGAPLAEITDRLLVAFGRQILDIVPGRVSTEVDARLSFDTRATIERARSLIALYEAAGVARERVLIKIASTWEGIQAARLLQQEGIRCNLTLLFSLVQAAACAEAGVQLISPFVGRIYDWHKKAAGAQWNEAQQSGVNDPGVQSVARIFAYYKAYGVATEVMGASFRNTGQILALAGCDLLTISPELLARLDATEGEVPLSLSEPLPGAALPKALPSGEIAFRSLLNEDAMASEKLAEGIRLFVGDAQRLDDLLRAAGAY.

Lysine 126 (schiff-base intermediate with substrate) is an active-site residue.

This sequence belongs to the transaldolase family. Type 1 subfamily. In terms of assembly, homodimer.

Its subcellular location is the cytoplasm. It carries out the reaction D-sedoheptulose 7-phosphate + D-glyceraldehyde 3-phosphate = D-erythrose 4-phosphate + beta-D-fructose 6-phosphate. It participates in carbohydrate degradation; pentose phosphate pathway; D-glyceraldehyde 3-phosphate and beta-D-fructose 6-phosphate from D-ribose 5-phosphate and D-xylulose 5-phosphate (non-oxidative stage): step 2/3. Its function is as follows. Transaldolase is important for the balance of metabolites in the pentose-phosphate pathway. The polypeptide is Transaldolase (Bordetella avium (strain 197N)).